The sequence spans 73 residues: uncharacterized protein (73 aa).

Residues 20-49 are a coiled coil; the sequence is NATYNKNLELEKRLAKIRNEIPNKSKLIAT.

This is an uncharacterized protein from Acheta domesticus (House cricket).